The primary structure comprises 181 residues: Inner membrane-spanning protein YciB (181 aa).

The next 5 helical transmembrane spans lie at 10–30 (LIIF…GALI), 50–70 (MQLI…ALHD), 80–100 (IVYV…KPAI), 120–140 (WAWV…AYHL), and 148–168 (FKVF…GGYI).

It belongs to the YciB family.

Its subcellular location is the cell inner membrane. Functionally, plays a role in cell envelope biogenesis, maintenance of cell envelope integrity and membrane homeostasis. The protein is Inner membrane-spanning protein YciB of Vibrio cholerae serotype O1 (strain ATCC 39315 / El Tor Inaba N16961).